A 784-amino-acid chain; its full sequence is LPS-assembly protein LptD (784 aa).

The signal sequence occupies residues 1 to 24 (MKKRIPTLLATMIATALYSQQGLA). Intrachain disulfides connect Cys31/Cys724 and Cys173/Cys725.

This sequence belongs to the LptD family. Component of the lipopolysaccharide transport and assembly complex. Interacts with LptE and LptA. Contains two intramolecular disulfide bonds.

The protein localises to the cell outer membrane. Its function is as follows. Together with LptE, is involved in the assembly of lipopolysaccharide (LPS) at the surface of the outer membrane. The sequence is that of LPS-assembly protein LptD from Escherichia coli O1:K1 / APEC.